Here is a 69-residue protein sequence, read N- to C-terminus: Large ribosomal subunit protein uL29 (69 aa).

It belongs to the universal ribosomal protein uL29 family.

This is Large ribosomal subunit protein uL29 from Polaromonas sp. (strain JS666 / ATCC BAA-500).